The sequence spans 332 residues: D-alanine--D-alanine ligase (332 aa).

The 201-residue stretch at 112 to 312 (KRIWRADGLP…YPDLCLRILA (201 aa)) folds into the ATP-grasp domain. 138–193 (FQELGAPMIVKPSREGSTIGLTKVTSLGQCEQAYRLAAQHDPEVLCEQFIDGDETT) serves as a coordination point for ATP. Residues D265, E279, and N281 each coordinate Mg(2+).

It belongs to the D-alanine--D-alanine ligase family. It depends on Mg(2+) as a cofactor. The cofactor is Mn(2+).

The protein resides in the cytoplasm. The catalysed reaction is 2 D-alanine + ATP = D-alanyl-D-alanine + ADP + phosphate + H(+). It participates in cell wall biogenesis; peptidoglycan biosynthesis. Its function is as follows. Cell wall formation. This chain is D-alanine--D-alanine ligase, found in Acidovorax ebreus (strain TPSY) (Diaphorobacter sp. (strain TPSY)).